We begin with the raw amino-acid sequence, 498 residues long: Cytochrome P450 71B31 (498 aa).

The chain crosses the membrane as a helical span at residues 3–23 (MFLGLLFLFPLFFILFKNLLP). Cysteine 441 is a heme binding site.

It belongs to the cytochrome P450 family. Heme serves as cofactor.

Its subcellular location is the membrane. The chain is Cytochrome P450 71B31 (CYP71B31) from Arabidopsis thaliana (Mouse-ear cress).